We begin with the raw amino-acid sequence, 370 residues long: Aldo-keto reductase NECHADRAFT_45914 (370 aa).

Aspartate 78 lines the NADP(+) pocket. Tyrosine 83 (proton donor) is an active-site residue. A substrate-binding site is contributed by histidine 174. NADP(+) contacts are provided by residues 204-205 (SS), glutamine 230, 259-269 (APLASGRLARR), and 333-341 (STVQRIEEA).

This sequence belongs to the aldo/keto reductase family.

Its pathway is secondary metabolite biosynthesis. Functionally, aldo-keto reductase; part of the gene cluster that mediates the biosynthesis of sansalvamide, a cyclic pentadepsipeptide that shows promising results as potential anti-cancer drug. The nonribosmal peptide synthetase NRPS30 produces sansalvamide by incorporating successively one phenylalanine, one leucine, one alpha-hydroxyisocaproic acid (HICA), one valine and one leucine before sansalvamide is released from by cyclization by the terminal C domain of NRPS30. The HICA residue is probably provided by reduction of alpha-ketoisocaproate by the cluster-specific aldo-keto reductase (NECHADRAFT_45914). The protein is Aldo-keto reductase NECHADRAFT_45914 of Fusarium vanettenii (strain ATCC MYA-4622 / CBS 123669 / FGSC 9596 / NRRL 45880 / 77-13-4) (Fusarium solani subsp. pisi).